The chain runs to 100 residues: UPF0213 protein YhbQ (100 aa).

A GIY-YIG domain is found at Thr2–Arg77.

Belongs to the UPF0213 family.

The polypeptide is UPF0213 protein YhbQ (Escherichia coli O127:H6 (strain E2348/69 / EPEC)).